A 78-amino-acid polypeptide reads, in one-letter code: Conotoxin CaFr179 (78 aa).

An N-terminal signal peptide occupies residues 1-19 (MSGLGIMVLTLLLLVFMEA). Residues 20-44 (SHQDAGEKQATQRDAINVRRRRSLA) constitute a propeptide that is removed on maturation. 3 cysteine pairs are disulfide-bonded: C52–C64, C56–C72, and C63–C76. The residue at position 77 (F77) is a Phenylalanine amide.

Belongs to the conotoxin O3 superfamily. In terms of tissue distribution, expressed by the venom duct.

It is found in the secreted. This is Conotoxin CaFr179 from Conus caracteristicus (Characteristic cone).